The following is a 240-amino-acid chain: tRNA1(Val) (adenine(37)-N6)-methyltransferase (240 aa).

This sequence belongs to the methyltransferase superfamily. tRNA (adenine-N(6)-)-methyltransferase family.

The protein localises to the cytoplasm. It catalyses the reaction adenosine(37) in tRNA1(Val) + S-adenosyl-L-methionine = N(6)-methyladenosine(37) in tRNA1(Val) + S-adenosyl-L-homocysteine + H(+). In terms of biological role, specifically methylates the adenine in position 37 of tRNA(1)(Val) (anticodon cmo5UAC). This Christiangramia forsetii (strain DSM 17595 / CGMCC 1.15422 / KT0803) (Gramella forsetii) protein is tRNA1(Val) (adenine(37)-N6)-methyltransferase.